We begin with the raw amino-acid sequence, 298 residues long: MSTDKNILLYAIANNFKETLGLKVCKSTKGYISEYSESYSELSNNDKMYYTKYAIAIINCLSKYLEEQFEQKMCMFKMNDEDSEVTHDFRIVCDDEEVIHLSMDYKKIGVNPIIPDRLMKLCGYNKNTNMYKEYTKNYNNICKNIYKKIGSYDKYSELSDKQREKIIYRPMNELLINTIGGKKKCTEKLYEHVFPEGVNANRIVIKWHKNRFIVYDFRTQVDEIKSFKLSPFKSKSKQPEDDVRILYLTFKNGSKLEPQFILTLNTNSTDINEHISLKYTIKLDNIDELFKIGGSSIQ.

This is an uncharacterized protein from Acanthamoeba polyphaga mimivirus (APMV).